A 520-amino-acid chain; its full sequence is Cytochrome b5 reductase 4 (520 aa).

M1 is modified (N-acetylmethionine). The segment covering 1–16 has biased composition (low complexity); that stretch reads MLNVPSQSFPGPSSQQ. Residues 1 to 27 are disordered; the sequence is MLNVPSQSFPGPSSQQRVASGGRSKVP. The Cytochrome b5 heme-binding domain occupies 54-130; it reads LIEVTEEELK…LKECLVGRMA (77 aa). 2 residues coordinate heme: H89 and H112. The CS domain maps to 164 to 255; sequence PSSPSYDWFQ…KENTSWKCLG (92 aa). Residues 272-384 form the FAD-binding FR-type domain; the sequence is LFYRKCQLVS…SNPEGNFIIS (113 aa). FAD is bound by residues 364–379 and 391–423; these read DQLQ…NPEG and DLFL…KVKL.

This sequence belongs to the flavoprotein pyridine nucleotide cytochrome reductase family. It depends on FAD as a cofactor.

It localises to the endoplasmic reticulum. It catalyses the reaction 2 Fe(III)-[cytochrome b5] + NADH = 2 Fe(II)-[cytochrome b5] + NAD(+) + H(+). NADH-cytochrome b5 reductase involved in endoplasmic reticulum stress response pathway. Plays a critical role in protecting pancreatic beta-cells against oxidant stress, possibly by protecting the cell from excess buildup of reactive oxygen species (ROS). This Bos taurus (Bovine) protein is Cytochrome b5 reductase 4 (CYB5R4).